We begin with the raw amino-acid sequence, 263 residues long: Small ribosomal subunit protein eS4, X isoform (263 aa).

In terms of domain architecture, S4 RNA-binding spans 42 to 104 (LPLIIFLRNR…TGEHFRLVYD (63 aa)). Lys230 is covalently cross-linked (Glycyl lysine isopeptide (Lys-Gly) (interchain with G-Cter in SUMO2)). Lys233 is modified (N6-acetyllysine).

This sequence belongs to the eukaryotic ribosomal protein eS4 family. As to quaternary structure, component of the small ribosomal subunit. Part of the small subunit (SSU) processome, composed of more than 70 proteins and the RNA chaperone small nucleolar RNA (snoRNA) U3. Identified in a IGF2BP1-dependent mRNP granule complex containing untranslated mRNAs.

The protein localises to the cytoplasm. Its subcellular location is the nucleus. It is found in the nucleolus. In terms of biological role, component of the small ribosomal subunit. The ribosome is a large ribonucleoprotein complex responsible for the synthesis of proteins in the cell. Part of the small subunit (SSU) processome, first precursor of the small eukaryotic ribosomal subunit. During the assembly of the SSU processome in the nucleolus, many ribosome biogenesis factors, an RNA chaperone and ribosomal proteins associate with the nascent pre-rRNA and work in concert to generate RNA folding, modifications, rearrangements and cleavage as well as targeted degradation of pre-ribosomal RNA by the RNA exosome. The protein is Small ribosomal subunit protein eS4, X isoform (RPS4X) of Monodelphis domestica (Gray short-tailed opossum).